The following is a 282-amino-acid chain: Release factor glutamine methyltransferase (282 aa).

S-adenosyl-L-methionine-binding residues include D141, F169, and N186. Position 186-189 (186-189) interacts with substrate; that stretch reads NPPY.

It belongs to the protein N5-glutamine methyltransferase family. PrmC subfamily.

The enzyme catalyses L-glutaminyl-[peptide chain release factor] + S-adenosyl-L-methionine = N(5)-methyl-L-glutaminyl-[peptide chain release factor] + S-adenosyl-L-homocysteine + H(+). In terms of biological role, methylates the class 1 translation termination release factors RF1/PrfA and RF2/PrfB on the glutamine residue of the universally conserved GGQ motif. The protein is Release factor glutamine methyltransferase of Mycoplasma mycoides subsp. mycoides SC (strain CCUG 32753 / NCTC 10114 / PG1).